A 2110-amino-acid chain; its full sequence is MDEQEFKLFLKFFILELKGILREIKNSHQLLDSWTKLNSLGTLIQIFFNPERAFQLLDPRVWKILLSRNSRGWRKTRHFTIGRVLLFVVVVLMYRMSRRNMVENKKSYLTGVLPIPLNPIGHRNDTLEESIGFSNINRLILPLLYLPKGKKIPESSFLDPNESTWALPITKKSIMPESRWGSRWWCSWVGKRRDSSCKRAHKTVAGIEISFKEKKSKYLEFLEDSEYPTLINQREIQQIKEESILWHPSPSLERTEEEIKEFLGNSTRSLRSFFSDRWSELYLSSNPTERFTRDQKLLKQDLSFVPYRRSENQEIVNLFKIITYLQKTVSIYPISSDPGCDRVPKDELDVDSSKKISFFKKNPFFDLLNLFHDRSRGGYTLERDFESEERFEERADLFTLSITEPDQVYHNSPKMDLIHIQEKGYIRKVLDRFFLMNRSARNFESGIPGAQIGNETLSHRTLMKYTVNRHFSSLKKSRKKSFDPLLFIERSMNRDPAAYRDKWSKGGKTFQEHLEHFVSEQKNRFKVQKSRFKAVFDRFHQSQYSIDWSVFIDKQDFPKARLFFLFVLVRSFLYKSLPFLLSKLPLLLSKLPLLVSKVLPLLSKLLPFFFVSCGNIPIHRSEIRIYELKGPTDQPCNPLLESIGLQILHLNKLKPCLLDDHETSQKSKIVGTIDNTDSYFSILFDDEENWMNPVKAFQRSSLISAFYKANRLRFLNNPHRFSFYCNKIFPFVVEKARFKNSDFLYGQFLKTFFIRKKPFSLCGEKHAFGERATLLPIESEVSKILIPQVSKILIPDDFPQSGDERYNLCKSFHFPTRSVPLVDRALYSIADISERPLTEGQMVNLERTSFQPLSDIHLSDSERKNLHQDLNFNSNMGLIHTPYSEKDLPSEKRKKRNLGRNLKKCVEKGQMFRTLLSKMYRTLLSKWNLFQTYMPWFLTSTGYKYLTLLFLDLFSDLVPILSLGIRQNCVSLFDHILGDIRDDIRQGVIRPWQILQEKWVLPQRNRIREISRMCLRNLTLSAERIRRNNESPLTHTHLRSPNVLEFLYSTLLLLLVAGYLVCTYLSRLSKDYGELQTELKKVKSLMIPSYTIELRKLMDRYPPSELNSFGLKNLFLVAMEELKESLSVVGNMLEGGGRAYGVEAIFSNWNLNLIDISDLISLIPNPIDRITFSINTRHLSHTSKEIYSFIRKRERVYGAWIDDKIESLLSTSVAIDDCDRGNLLQFSTLTLTTEKGVDQILLSLTQSSKNASGSQMIEQPGEMYLRHVVDLQKKYLMGYEFNTSSLAERRIFLAHYQTMTYSKTSCGVNAFHFPSHEKPFSLRLDLSPPRGILVIGSIGTGRSYLIKSLAKNTHFPLITLEMEARSSWPFFQHLDEIYGDQLEYVYDDTSLSVEVEEEEDTSWGIEEWSLPDTREDDEIEDQAEMDTRRDLDGIEYTHAIQDMIDLGISVDAQLNFLPESILINEIEGHDVDELDEAETELWELWMEEWDRHLLGISLQFALVRAMTPCILWIPNIHDVDLEDRTTLAGLMNSLSGDSEGRSTRKTLVIASTHLPKKVDPALIASNRFNTCIKVRRLLSTQERERFFTLSYTRGFHFEKEIFDTNGFRSITTQDLAALTNEALSISITQKKSIIDTNTIRFALHRQTWAVESRSISISDHGILFYQTGRALAQNLFLSQGLIDPISVYIKKKSCNDDGYSYLYRWYLELGTSMKRLTILLYLLSCFAGSVAQDLWSPPGPDDKAEMFSYGLVENDSHLAQGLLELEGALVASGTEKACSRFDNDQVTLLFRAEPSLDRMQDGFCSIFEQEGEEAAPGLEKPLVTHIVSAPRIWNPWLILFDWIDIEEASRKEEEAELQDEEAELQDEGAGRKDEEAELQEFQDLEDPQDQEGGLQELQGLQKEEAYLYQKALELQAQEDELQKYGPGFLESGTIMKKYPTRNRFRFFTEQGFFQASQFIWYPADSLFFLLKEQALGFVFSQPEFFADEEISKEGLLALTVQRLPFSTTCHWFIKKRQERHFEFLIHRERWLRTNSSLSNGFFCSKTQTLFESYQYLSNLFLSNGRLVDQMTKTLLRKRWIFPDEMKIQIGFMYTGEGFPITSPERYVAMK.

1336–1343 (GSIGTGRS) provides a ligand contact to ATP. The segment at 1852–1876 (EEEAELQDEEAELQDEGAGRKDEEA) is disordered. Residues 1854-1866 (EAELQDEEAELQD) are compositionally biased toward acidic residues.

It belongs to the Ycf2 family.

The protein localises to the plastid. It is found in the chloroplast stroma. Its function is as follows. Probable ATPase of unknown function. Its presence in a non-photosynthetic plant (Epifagus virginiana) and experiments in tobacco indicate that it has an essential function which is probably not related to photosynthesis. This chain is Protein Ycf2 (ycf2-A), found in Pelargonium hortorum (Common geranium).